Here is a 1049-residue protein sequence, read N- to C-terminus: MSREEQIKKLNQYLDNRELAFRAKDGDKNIFHTESQLDSSLKKNTAFMKRCKSSLTSENYDSFIKEIKTLSLKKFIPEITAAIVEGMMKCKATKDILSSVKIVWALNLRFSTAFTGPMLANLYCALYPNPGYSLCHESYFELKQNENEVSEKDRSSHLLKVRPLLRFLIEFWLNGVVGTPEDFVSYLPSTDSNDKKFRKPWFEEQNLKKPLVVLLFNDLMDTRFGFLLLPVLTSLVRTFSCELFTTEDFEDKETLELVNRLNPVVWRTYLRKSLNSYVDKLEVYCQKRKSLFEELNKQYQEQSIIRADPNNEKFQRLANFSKSIESEFSSYASLSEVLNRKASEDLLELNFMEKASSGTNSVFNASGERSESANVETAQVWDDREQYFFYEVFPNFNEGSIAEMKSSIYESSQEGIRSSSENNKKEDDLKDSTGDLNTTQVSSRVDNFLLKLPSMVSLELTNEMALEFYDLNTKASRNRLIKALCTIPRTSSFLVPYYVRLARILSQLSSEFSTSLVDHARHSFKRMIHRKAKHEYDTRLLIVRYISELTKFQLMPFHMVFECYKLCINEFTPFDLEVLALLLESCGRFLLRYPETKLQMQSFLEAIQKKKLASALASQDQLVLENALHFVNPPKRGIIVSKKKSLKEEFLYDLIQIRLKDDNVFPTLLLLRKFDWKDDYQILYNTIMEVWNIKYNSLNALARLLSALYKFHPEFCIHVIDDTLESLFSAVNNSDHVEKQKRLAQARFISELCVIHMLDVRAITNFLFHLLPLEKFESFLTMKASTLTNINNDMFRLRLIVVVLQTCGPSIIRSKTKKTMLTYLLAYQCYFLIQPEMPLDMLYEFEDVIGYVRPSMKVYMHYEEARNALTERLQAISDDWEEDDTRPVFQGANDGDISSNEESVYLPEDISDESETDEESSGLEESDLLDSEDEDIDNEMQLSRELDEEFERLTNESLLTRMHEKNPGFDVPLPLRASSLGSPYVTRNEESASESSHVMFTLLTKRGNKQRSQYLEIPSHSSLVRSTKNQQTEEIMERKRVKEMVLNFE.

The region spanning 41–282 (LKKNTAFMKR…SLNSYVDKLE (242 aa)) is the MIF4G 1 domain. Y60 bears the Phosphotyrosine mark. The span at 412–421 (SQEGIRSSSE) shows a compositional bias: polar residues. The tract at residues 412 to 438 (SQEGIRSSSENNKKEDDLKDSTGDLNT) is disordered. Over residues 422-433 (NNKKEDDLKDST) the composition is skewed to basic and acidic residues. 2 MIF4G domains span residues 446–634 (DNFL…VNPP) and 649–855 (EFLY…VRPS). The interval 909–934 (DISDESETDEESSGLEESDLLDSEDE) is disordered.

It localises to the cytoplasm. In terms of biological role, involved in nonsense-mediated decay of mRNAs containing premature stop codons. It interacts, via its C-terminus, with NAM7/UPF1. Could be involved in determining the efficiency of translational termination or reinitiation or factors involved in the initial assembly of an initiation- and termination-competent mRNP. The chain is Nonsense-mediated mRNA decay protein 2 (upf2) from Schizosaccharomyces pombe (strain 972 / ATCC 24843) (Fission yeast).